A 1221-amino-acid polypeptide reads, in one-letter code: Coatomer subunit alpha (1221 aa).

WD repeat units follow at residues 7 to 46 (TKAS…LLEK), 49 to 88 (EHEG…CLFT), 91 to 130 (GHKD…CIAE), 133 to 172 (GHNH…KKMT), 202 to 241 (GHDR…VDTF), 243 to 282 (GHYN…TVHM), 285 to 323 (RDHD…PLFV), 358 to 399 (PSNN…SNTV), and 528 to 567 (WDDN…TGVK). The segment at 820-885 (GVEQSTSTPT…DDGGWERDDL (66 aa)) is disordered. A compositionally biased stretch (low complexity) spans 844–857 (SQQQSSQQQQQQQQ). Residues 910–953 (PQPGPSFSMIWARNSQFAVDHIAAGSFESAMNILNSQIGAVNFD) form a WD 10 repeat.

As to quaternary structure, oligomeric complex that consists of at least the alpha, beta, beta', gamma, delta, epsilon and zeta subunits.

It is found in the cytoplasm. The protein resides in the golgi apparatus membrane. In terms of biological role, the coatomer is a cytosolic protein complex that binds to dilysine motifs and reversibly associates with Golgi non-clathrin-coated vesicles, which further mediate biosynthetic protein transport from the ER, via the Golgi up to the trans Golgi network. Coatomer complex is required for budding from Golgi membranes, and is essential for the retrograde Golgi-to-ER transport of dilysine-tagged proteins. The protein is Coatomer subunit alpha (copa) of Dictyostelium discoideum (Social amoeba).